The following is a 196-amino-acid chain: MPELIVPVGLVCGIDEAGRGPLAGPVVAAAVILDPERPIVGLNDSKKLSEKKRDALAEIIRERALAWAVAEATVEEIDRLNILQATMLAMQRAVAALQVKAESALVDGNRCPKLDIPCEAVVKGDGKIASIAAASILAKTVRDAGMLVLHAQYPHYGFDRHMGYPTAAHFAALEAHGASPVHRRSFGPVARQLSLL.

In terms of domain architecture, RNase H type-2 spans 9 to 196 (GLVCGIDEAG…GPVARQLSLL (188 aa)). The a divalent metal cation site is built by aspartate 15, glutamate 16, and aspartate 107.

This sequence belongs to the RNase HII family. Mn(2+) is required as a cofactor. The cofactor is Mg(2+).

The protein resides in the cytoplasm. It carries out the reaction Endonucleolytic cleavage to 5'-phosphomonoester.. Functionally, endonuclease that specifically degrades the RNA of RNA-DNA hybrids. In Dechloromonas aromatica (strain RCB), this protein is Ribonuclease HII.